A 273-amino-acid chain; its full sequence is Diaminopimelate epimerase (273 aa).

The substrate site is built by Asn-11 and Asn-60. Cys-69 (proton donor) is an active-site residue. Substrate contacts are provided by residues 70–71 (GN), Asn-181, and 199–200 (ER). Catalysis depends on Cys-209, which acts as the Proton acceptor. Substrate is bound at residue 210–211 (GT).

The protein belongs to the diaminopimelate epimerase family. In terms of assembly, homodimer.

Its subcellular location is the cytoplasm. The enzyme catalyses (2S,6S)-2,6-diaminopimelate = meso-2,6-diaminopimelate. It functions in the pathway amino-acid biosynthesis; L-lysine biosynthesis via DAP pathway; DL-2,6-diaminopimelate from LL-2,6-diaminopimelate: step 1/1. Catalyzes the stereoinversion of LL-2,6-diaminopimelate (L,L-DAP) to meso-diaminopimelate (meso-DAP), a precursor of L-lysine and an essential component of the bacterial peptidoglycan. The polypeptide is Diaminopimelate epimerase (Helicobacter pylori (strain ATCC 700392 / 26695) (Campylobacter pylori)).